We begin with the raw amino-acid sequence, 437 residues long: UDP-N-acetylmuramoylalanine--D-glutamate ligase (437 aa).

Residue 112-118 (GSNGKST) coordinates ATP.

It belongs to the MurCDEF family.

The protein localises to the cytoplasm. It catalyses the reaction UDP-N-acetyl-alpha-D-muramoyl-L-alanine + D-glutamate + ATP = UDP-N-acetyl-alpha-D-muramoyl-L-alanyl-D-glutamate + ADP + phosphate + H(+). It participates in cell wall biogenesis; peptidoglycan biosynthesis. Cell wall formation. Catalyzes the addition of glutamate to the nucleotide precursor UDP-N-acetylmuramoyl-L-alanine (UMA). The sequence is that of UDP-N-acetylmuramoylalanine--D-glutamate ligase from Haemophilus influenzae (strain PittGG).